Here is a 236-residue protein sequence, read N- to C-terminus: tRNA1(Val) (adenine(37)-N6)-methyltransferase (236 aa).

This sequence belongs to the methyltransferase superfamily. tRNA (adenine-N(6)-)-methyltransferase family.

Its subcellular location is the cytoplasm. The catalysed reaction is adenosine(37) in tRNA1(Val) + S-adenosyl-L-methionine = N(6)-methyladenosine(37) in tRNA1(Val) + S-adenosyl-L-homocysteine + H(+). Functionally, specifically methylates the adenine in position 37 of tRNA(1)(Val) (anticodon cmo5UAC). The polypeptide is tRNA1(Val) (adenine(37)-N6)-methyltransferase (Actinobacillus pleuropneumoniae serotype 5b (strain L20)).